The chain runs to 574 residues: Sulfate adenylyltransferase (574 aa).

The segment at 1 to 170 (MANTPHGGVL…LEAINRLEHY (170 aa)) is N-terminal. The interval 171–395 (DFLDLRFTPS…LREENPLPAE (225 aa)) is catalytic. Residue Gln-198 participates in sulfate binding. Residues 198–201 (QTRN) and 292–295 (GRDH) each bind ATP. Catalysis depends on residues Thr-199, Arg-200, and Asn-201. Residue Arg-200 participates in sulfate binding. Ala-296 lines the sulfate pocket. An ATP-binding site is contributed by Met-334. The allosteric regulation domain; adenylyl-sulfate kinase-like stretch occupies residues 396-574 (KGFTVFMTGY…LESNGLLDRL (179 aa)). 3'-phosphoadenylyl sulfate contacts are provided by residues 435–438 (ENVR), Arg-452, 478–479 (IA), and Lys-516.

The protein in the N-terminal section; belongs to the sulfate adenylyltransferase family. This sequence in the C-terminal section; belongs to the APS kinase family. Homohexamer. Dimer of trimers.

The protein resides in the cytoplasm. The catalysed reaction is sulfate + ATP + H(+) = adenosine 5'-phosphosulfate + diphosphate. Its pathway is sulfur metabolism; hydrogen sulfide biosynthesis; sulfite from sulfate: step 1/3. Allosterically inhibited by 3'-phosphoadenosine 5'-phosphosulfate (PAPS). Its function is as follows. Catalyzes the first intracellular reaction of sulfate assimilation, forming adenosine-5'-phosphosulfate (APS) from inorganic sulfate and ATP. Plays an important role in sulfate activation as a component of the biosynthesis pathway of sulfur-containing amino acids. In Gibberella zeae (strain ATCC MYA-4620 / CBS 123657 / FGSC 9075 / NRRL 31084 / PH-1) (Wheat head blight fungus), this protein is Sulfate adenylyltransferase.